We begin with the raw amino-acid sequence, 398 residues long: 4-hydroxy-3-methylbut-2-enyl diphosphate reductase (398 aa).

A [4Fe-4S] cluster-binding site is contributed by Cys-66. Residue His-96 participates in (2E)-4-hydroxy-3-methylbut-2-enyl diphosphate binding. His-96 is a dimethylallyl diphosphate binding site. Residue His-96 participates in isopentenyl diphosphate binding. Cys-157 provides a ligand contact to [4Fe-4S] cluster. His-185 serves as a coordination point for (2E)-4-hydroxy-3-methylbut-2-enyl diphosphate. His-185 is a binding site for dimethylallyl diphosphate. His-185 lines the isopentenyl diphosphate pocket. Glu-187 acts as the Proton donor in catalysis. Thr-250 is a binding site for (2E)-4-hydroxy-3-methylbut-2-enyl diphosphate. Cys-288 serves as a coordination point for [4Fe-4S] cluster. Positions 317, 318, 319, and 380 each coordinate (2E)-4-hydroxy-3-methylbut-2-enyl diphosphate. Dimethylallyl diphosphate-binding residues include Ser-317, Ser-318, Asn-319, and Ser-380. Ser-317, Ser-318, Asn-319, and Ser-380 together coordinate isopentenyl diphosphate.

It belongs to the IspH family. Requires [4Fe-4S] cluster as cofactor.

It carries out the reaction isopentenyl diphosphate + 2 oxidized [2Fe-2S]-[ferredoxin] + H2O = (2E)-4-hydroxy-3-methylbut-2-enyl diphosphate + 2 reduced [2Fe-2S]-[ferredoxin] + 2 H(+). It catalyses the reaction dimethylallyl diphosphate + 2 oxidized [2Fe-2S]-[ferredoxin] + H2O = (2E)-4-hydroxy-3-methylbut-2-enyl diphosphate + 2 reduced [2Fe-2S]-[ferredoxin] + 2 H(+). Its pathway is isoprenoid biosynthesis; dimethylallyl diphosphate biosynthesis; dimethylallyl diphosphate from (2E)-4-hydroxy-3-methylbutenyl diphosphate: step 1/1. It functions in the pathway isoprenoid biosynthesis; isopentenyl diphosphate biosynthesis via DXP pathway; isopentenyl diphosphate from 1-deoxy-D-xylulose 5-phosphate: step 6/6. In terms of biological role, catalyzes the conversion of 1-hydroxy-2-methyl-2-(E)-butenyl 4-diphosphate (HMBPP) into a mixture of isopentenyl diphosphate (IPP) and dimethylallyl diphosphate (DMAPP). Acts in the terminal step of the DOXP/MEP pathway for isoprenoid precursor biosynthesis. The polypeptide is 4-hydroxy-3-methylbut-2-enyl diphosphate reductase (Prochlorococcus marinus (strain MIT 9301)).